We begin with the raw amino-acid sequence, 985 residues long: Ephrin type-A receptor 4-B (985 aa).

The N-terminal stretch at 1-20 is a signal peptide; it reads MAGIVHGILFCGLFGLCWAV. The Extracellular segment spans residues 21–547; it reads TGSRIYPASE…MIGEGTSPTV (527 aa). Positions 30–209 constitute an Eph LBD domain; sequence EVTLLDSRSV…FYKKCPLTVR (180 aa). Fibronectin type-III domains follow at residues 328–438 and 439–536; these read PPSA…TNQA and APST…TVPS. N-linked (GlcNAc...) asparagine glycosylation is found at asparagine 340 and asparagine 407. The helical transmembrane segment at 548-569 threads the bilayer; the sequence is LLVSVAGSIVLVVILIAAFVIS. Over 570–985 the chain is Cytoplasmic; that stretch reads RRRSKYSKAK…QQMQGRMVPV (416 aa). A phosphotyrosine; by autocatalysis mark is found at tyrosine 595 and tyrosine 601. The region spanning 620–881 is the Protein kinase domain; sequence IKIEKVIGVG…QIVSMLDKLI (262 aa). ATP contacts are provided by residues 626–634 and lysine 652; that span reads IGVGEFGEV. Aspartate 745 (proton acceptor) is an active-site residue. Phosphotyrosine; by autocatalysis is present on residues tyrosine 778 and tyrosine 927. Positions 910-974 constitute an SAM domain; sequence SQVASVLDWL…LSSVQGMRTQ (65 aa). Residues 983–985 carry the PDZ-binding motif; sequence VPV.

The protein belongs to the protein kinase superfamily. Tyr protein kinase family. Ephrin receptor subfamily. In terms of tissue distribution, localized expression in a subset of neural crest and neural tissues in embryos.

The protein resides in the cell membrane. It localises to the early endosome. It carries out the reaction L-tyrosyl-[protein] + ATP = O-phospho-L-tyrosyl-[protein] + ADP + H(+). Functionally, receptor tyrosine kinase which binds membrane-bound ephrin family ligands residing on adjacent cells, leading to contact-dependent bidirectional signaling into neighboring cells. The signaling pathway downstream of the receptor is referred to as forward signaling while the signaling pathway downstream of the ephrin ligand is referred to as reverse signaling. Highly promiscuous, it has the unique property among Eph receptors to bind and to be physiologically activated by both GPI-anchored ephrin-A and transmembrane ephrin-B ligands including EFNA1 and EFNB3. Upon activation by ephrin ligands, modulates cell morphology and integrin-dependent cell adhesion through regulation of the Rac, Rap and Rho GTPases activity. Plays an important role in the development of the nervous system controlling different steps of axonal guidance including the establishment of the corticospinal projections. The sequence is that of Ephrin type-A receptor 4-B (epha4-b) from Xenopus laevis (African clawed frog).